Consider the following 219-residue polypeptide: Thiamine-phosphate synthase (219 aa).

Residues 48 to 52 and asparagine 84 each bind 4-amino-2-methyl-5-(diphosphooxymethyl)pyrimidine; that span reads QFRQK. Positions 85 and 104 each coordinate Mg(2+). Serine 123 is a binding site for 4-amino-2-methyl-5-(diphosphooxymethyl)pyrimidine. 150–152 contributes to the 2-[(2R,5Z)-2-carboxy-4-methylthiazol-5(2H)-ylidene]ethyl phosphate binding site; sequence TQS. Position 153 (lysine 153) interacts with 4-amino-2-methyl-5-(diphosphooxymethyl)pyrimidine. 2-[(2R,5Z)-2-carboxy-4-methylthiazol-5(2H)-ylidene]ethyl phosphate is bound by residues glycine 181 and 199–200; that span reads IS.

Belongs to the thiamine-phosphate synthase family. Mg(2+) is required as a cofactor.

The catalysed reaction is 2-[(2R,5Z)-2-carboxy-4-methylthiazol-5(2H)-ylidene]ethyl phosphate + 4-amino-2-methyl-5-(diphosphooxymethyl)pyrimidine + 2 H(+) = thiamine phosphate + CO2 + diphosphate. It catalyses the reaction 2-(2-carboxy-4-methylthiazol-5-yl)ethyl phosphate + 4-amino-2-methyl-5-(diphosphooxymethyl)pyrimidine + 2 H(+) = thiamine phosphate + CO2 + diphosphate. It carries out the reaction 4-methyl-5-(2-phosphooxyethyl)-thiazole + 4-amino-2-methyl-5-(diphosphooxymethyl)pyrimidine + H(+) = thiamine phosphate + diphosphate. The protein operates within cofactor biosynthesis; thiamine diphosphate biosynthesis; thiamine phosphate from 4-amino-2-methyl-5-diphosphomethylpyrimidine and 4-methyl-5-(2-phosphoethyl)-thiazole: step 1/1. In terms of biological role, condenses 4-methyl-5-(beta-hydroxyethyl)thiazole monophosphate (THZ-P) and 2-methyl-4-amino-5-hydroxymethyl pyrimidine pyrophosphate (HMP-PP) to form thiamine monophosphate (TMP). The sequence is that of Thiamine-phosphate synthase from Helicobacter pylori (strain Shi470).